Consider the following 105-residue polypeptide: Blood plasma apolipoprotein LAL1 (105 aa).

Positions 1 to 21 are cleaved as a signal peptide; the sequence is MKLHVAALATLAVVCILAAGS. Positions 22–29 are excised as a propeptide; that stretch reads EAAPKAMS.

In terms of tissue distribution, plasma.

It is found in the secreted. The sequence is that of Blood plasma apolipoprotein LAL1 from Petromyzon marinus (Sea lamprey).